The sequence spans 1166 residues: MSGRRCAGGGAACASAGAEAVEPSARELFEACRNGDVERVKRLVTPEKVNSRDTAGRKSTPLHFAAGFGRKDVVEYLLQNGANVQARDDGGLIPLHNACSFGHAEVVNLLLQHGADPNARDNWNYTPLHEAAIKGKIDVCIVLLQHGAEPTIRNTDGRTALDLADPSAKAVLTGDYKKDELLESARSGNEEKMMALLTPLNVNCHASDGRKSTPLHLAAGYNRVKIVQLLLHHGADVHAKDKGDLVPLHNACSYGHYEVTELLVKHGACVNAMDLWQFTPLHEAASKNRIEVCSLLLSYGADPTLLNCHNKSAIDLAPTAQLKERLSYEFKGHSLLQAAREADVTRIKKHLSLEMVNFKHPQTHETALHCAAASPYPKRKQICELLLRKGANTNEKTKEFLTPLHVASENAHNDVVEVVVKHEAKVNALDSLGQTSLHRAAHCGHLQTCRLLLSYGCDPNIISLQGFTALQMGNENVQQLLQEGASLGHSEADRQLLEAAKAGDVETVKKLCTVQSVNCRDIEGRQSTPLHFAAGYNRVSVVEYLLQHGADVHAKDKGGLVPLHNACSYGHYEVAELLVKHGAVVNVADLWKFTPLHEAAAKGKYEICKLLLQHGADPTKKNRDGNTPLDLVKDGDTDIQDLLRGDAALLDAAKKGCLARVKKLSSPDNVNCRDTQGRHSTPLHLAAGYNNLEVAEYLLQHGADVNAQDKGGLIPLHNAASYGHVDVAALLIKYNACVNATDKWAFTPLHEAAQKGRTQLCALLLAHGADPTLKNQEGQTPLDLVSADDVSALLTAAMPPSALPTCYKPQVLSGVRGPGATADALSSGPSSPSSLSAASSLDNLSGSFSELSAVVSSSAAEGATGLQRKEDSGIDFSITQFIRNLGLEHLMDIFEREQITLDVLVEMGHKELKEIGINAYGHRHKLIKGVERLISGQQGLNPYLTLNNSGSGTILIDLSPDDKEFQSVEEEMQSTVREHRDGGHAGGVFNRYNILKIQKVCNKKLWERYTHRRKEVSEENHNHANERMLFHGSPFVNAIIHKGFDERHAYIGGMFGAGIYFAENSSKSNQYVYGIGGGTGCPIHKDRSCYICHRQLLFCRVTLGKSFLQFSAMKMAHSPPGHHSVTGRPSVNGLALAEYVIYRGEQAYPEYLITYQIVRPEGMVDG.

4 ANK repeats span residues 23–52, 57–86, 90–119, and 123–152; these read PSAR…VNSR, RKST…NVQA, GGLI…DPNA, and WNYT…EPTI. Residue asparagine 203 is modified to (3S)-3-hydroxyasparagine; by HIF1AN. ANK repeat units lie at residues 210–239, 243–272, 276–305, 363–395, 399–428, 432–461, and 463–489; these read RKST…DVHA, GDLV…CVNA, WQFT…DPTL, THET…NTNE, EFLT…KVNA, LGQT…DPNI, and SLQG…SLGH. (3S)-3-hydroxyhistidine; by HIF1AN is present on histidine 238. Asparagine 271 carries the post-translational modification (3S)-3-hydroxyasparagine; by HIF1AN. At asparagine 427 the chain carries (3S)-3-hydroxyasparagine; by HIF1AN. A (3S)-3-hydroxyasparagine; by HIF1AN modification is found at asparagine 518. ANK repeat units lie at residues 525 to 554, 558 to 587, 591 to 620, and 624 to 652; these read RQST…DVHA, GGLV…VVNV, WKFT…DPTK, and DGNT…LLDA. Residues 545-553 form an HIF1AN-binding region; the sequence is LLQHGADVH. Histidine 553 carries the post-translational modification (3S)-3-hydroxyhistidine; by HIF1AN. A (3S)-3-hydroxyasparagine; by HIF1AN modification is found at asparagine 586. 3 positions are modified to (3S)-3-hydroxyasparagine; by HIF1AN: asparagine 671, asparagine 706, and asparagine 739. ANK repeat units follow at residues 678–707, 711–740, and 744–773; these read RHST…DVNA, GGLI…CVNA, and WAFT…DPTL. One can recognise an SAM domain in the interval 873–936; sequence GIDFSITQFI…IKGVERLISG (64 aa). One can recognise a PARP catalytic domain in the interval 959–1164; it reads SPDDKEFQSV…YQIVRPEGMV (206 aa). 4 residues coordinate Zn(2+): cysteine 1081, histidine 1084, cysteine 1089, and cysteine 1092.

Belongs to the ARTD/PARP family. Oligomerizes and associates with TNKS. Interacts with the cytoplasmic domain of LNPEP/Otase in SLC2A4/GLUT4-vesicles. Binds to the N-terminus of Grb14 and TRF1 with its ankyrin repeat region. Interacts with HIF1AN. Interacts with RNF146; this interaction leads to ubiquitination and proteasomal degradation. Interacts with NUMA1. Post-translationally, ubiquitinated by RNF146 when auto-poly-ADP-ribosylated, leading to its degradation. Deubiquitinated by USP25; leading to stabilization. In terms of processing, ADP-ribosylated (-auto). Poly-ADP-ribosylated protein is recognized by RNF146, followed by ubiquitination.

The protein resides in the cytoplasm. It localises to the golgi apparatus membrane. Its subcellular location is the nucleus. It is found in the chromosome. The protein localises to the telomere. It carries out the reaction NAD(+) + (ADP-D-ribosyl)n-acceptor = nicotinamide + (ADP-D-ribosyl)n+1-acceptor + H(+).. The catalysed reaction is L-aspartyl-[protein] + NAD(+) = 4-O-(ADP-D-ribosyl)-L-aspartyl-[protein] + nicotinamide. The enzyme catalyses L-glutamyl-[protein] + NAD(+) = 5-O-(ADP-D-ribosyl)-L-glutamyl-[protein] + nicotinamide. Functionally, poly-ADP-ribosyltransferase involved in various processes such as Wnt signaling pathway, telomere length and vesicle trafficking. Acts as an activator of the Wnt signaling pathway by mediating poly-ADP-ribosylation of AXIN1 and AXIN2, 2 key components of the beta-catenin destruction complex: poly-ADP-ribosylated target proteins are recognized by RNF146, which mediates their ubiquitination and subsequent degradation. Also mediates poly-ADP-ribosylation of BLZF1 and CASC3, followed by recruitment of RNF146 and subsequent ubiquitination. Mediates poly-ADP-ribosylation of TERF1, thereby contributing to the regulation of telomere length. Stimulates 26S proteasome activity. The protein is Poly [ADP-ribose] polymerase tankyrase-2 of Mus musculus (Mouse).